A 218-amino-acid chain; its full sequence is Guanylate kinase (218 aa).

One can recognise a Guanylate kinase-like domain in the interval 10–190; that stretch reads GLLIILSSPS…TEERLKTIIT (181 aa). 17–24 contributes to the ATP binding site; that stretch reads SPSGAGKS.

It belongs to the guanylate kinase family.

The protein localises to the cytoplasm. It carries out the reaction GMP + ATP = GDP + ADP. Functionally, essential for recycling GMP and indirectly, cGMP. This chain is Guanylate kinase, found in Jannaschia sp. (strain CCS1).